Here is a 317-residue protein sequence, read N- to C-terminus: Lactamase-like protein adaB (317 aa).

Zn(2+) contacts are provided by H97, H99, D101, and H102. The Proton donor/acceptor role is filled by D101.

Belongs to the metallo-beta-lactamase superfamily. It depends on Zn(2+) as a cofactor.

The catalysed reaction is 3-(2,4-dioxopentyl)-2,3,6,8,9-pentahydroxy-1-oxo-1,2,3,4-tetrahydroanthracene-2-carboxyl-[ACP] = 2-acetyl-3,4a,8,10,11,12a-hexahydroxy-1,4,4a,5,12,12a-hexahydrotetracene-1,12-dione + holo-[ACP] + H(+). Its pathway is secondary metabolite biosynthesis. Its function is as follows. Lactamase-like protein; part of the gene cluster that mediates the biosynthesis of the linear tetracyclic TAN-1612 neuropeptide Y receptor antagonist. The decaketide backbone of TAN-1612 is synthesized by the non-reducing polyketide synthase adaA via condensation of one acetyl-CoA starter unit with 9 malonyl-CoA units. The FAD-dependent monooxygenase adaC then performs hydroxylation at C2 while the polaketide chain is still attached to the NRPKS adaA. The alpha-hydroxylation step at C2 appears to be crucial for the following C18-C1 Claisen cyclization and release of the C9-hydroxyl version of TAN-1612 from the NRPKS adaA, two steps performed by the lactamase-like protein adaB. Finally, the O-methyltransferase adaD performs the C9 O-methylation to complete the biosynthesis of TAN-1612. This chain is Lactamase-like protein adaB, found in Aspergillus niger (strain ATCC MYA-4892 / CBS 513.88 / FGSC A1513).